The chain runs to 111 residues: Large ribosomal subunit protein uL22 (111 aa).

The protein belongs to the universal ribosomal protein uL22 family. In terms of assembly, part of the 50S ribosomal subunit.

This protein binds specifically to 23S rRNA; its binding is stimulated by other ribosomal proteins, e.g. L4, L17, and L20. It is important during the early stages of 50S assembly. It makes multiple contacts with different domains of the 23S rRNA in the assembled 50S subunit and ribosome. In terms of biological role, the globular domain of the protein is located near the polypeptide exit tunnel on the outside of the subunit, while an extended beta-hairpin is found that lines the wall of the exit tunnel in the center of the 70S ribosome. In Chlamydia trachomatis serovar L2 (strain ATCC VR-902B / DSM 19102 / 434/Bu), this protein is Large ribosomal subunit protein uL22.